A 132-amino-acid polypeptide reads, in one-letter code: Small ribosomal subunit protein uS8 (132 aa).

The protein belongs to the universal ribosomal protein uS8 family. As to quaternary structure, part of the 30S ribosomal subunit. Contacts proteins S5 and S12.

One of the primary rRNA binding proteins, it binds directly to 16S rRNA central domain where it helps coordinate assembly of the platform of the 30S subunit. This is Small ribosomal subunit protein uS8 from Ehrlichia canis (strain Jake).